The following is a 209-amino-acid chain: Leucyl/phenylalanyl-tRNA--protein transferase (209 aa).

This sequence belongs to the L/F-transferase family.

Its subcellular location is the cytoplasm. It carries out the reaction N-terminal L-lysyl-[protein] + L-leucyl-tRNA(Leu) = N-terminal L-leucyl-L-lysyl-[protein] + tRNA(Leu) + H(+). It catalyses the reaction N-terminal L-arginyl-[protein] + L-leucyl-tRNA(Leu) = N-terminal L-leucyl-L-arginyl-[protein] + tRNA(Leu) + H(+). The catalysed reaction is L-phenylalanyl-tRNA(Phe) + an N-terminal L-alpha-aminoacyl-[protein] = an N-terminal L-phenylalanyl-L-alpha-aminoacyl-[protein] + tRNA(Phe). Functions in the N-end rule pathway of protein degradation where it conjugates Leu, Phe and, less efficiently, Met from aminoacyl-tRNAs to the N-termini of proteins containing an N-terminal arginine or lysine. The polypeptide is Leucyl/phenylalanyl-tRNA--protein transferase (Paramagnetospirillum magneticum (strain ATCC 700264 / AMB-1) (Magnetospirillum magneticum)).